A 396-amino-acid polypeptide reads, in one-letter code: Tyrosine--tRNA ligase (396 aa).

Positions 43–52 (PSSPDIHLGH) match the 'HIGH' region motif. A 'KMSKS' region motif is present at residues 227–231 (KMSKS). Lys230 contributes to the ATP binding site. The S4 RNA-binding domain occupies 338–396 (TGVIDFIILSGLAKSKSEARRLLEQGAVEINSEKISDQNTPVKCGDIIKAGKRRYSKAI).

The protein belongs to the class-I aminoacyl-tRNA synthetase family. TyrS type 2 subfamily. Homodimer.

The protein localises to the cytoplasm. The enzyme catalyses tRNA(Tyr) + L-tyrosine + ATP = L-tyrosyl-tRNA(Tyr) + AMP + diphosphate + H(+). Catalyzes the attachment of tyrosine to tRNA(Tyr) in a two-step reaction: tyrosine is first activated by ATP to form Tyr-AMP and then transferred to the acceptor end of tRNA(Tyr). This chain is Tyrosine--tRNA ligase, found in Dehalococcoides mccartyi (strain CBDB1).